Here is a 311-residue protein sequence, read N- to C-terminus: Phospholipid phosphatase 3 (311 aa).

The Cytoplasmic portion of the chain corresponds to 1-33 (MQNYKYDKAIVAESKNGGSPALNNNPRKGGSKR). A Phosphoserine modification is found at Ser-19. A helical transmembrane segment spans residues 34 to 54 (VLLICLDLFCLFMAGLPFIII). Over 55 to 85 (ETSTIKPYHRGFYCNDESIKYPQKTGETIND) the chain is Extracellular. Residues 86–106 (AVLTAVGIVIAILAIITGEFY) traverse the membrane as a helical segment. The Cytoplasmic segment spans residues 107 to 123 (RIYYLKEKSRSTIQNPY). The Dityrosine basolateral targeting motif motif lies at 109-110 (YY). Residues 124 to 144 (VAALYKQVGCFLFGCAISQSF) form a helical membrane-spanning segment. Over 145–194 (TDIAKVSIGRLRPHFLNVCNPDFSQINCSVGYIQNYRCRGEDSKVQEARK) the chain is Extracellular. The tract at residues 149–157 (KVSIGRLRP) is phosphatase sequence motif I. A glycan (N-linked (GlcNAc...) asparagine) is linked at Asn-171. The short motif at 183–185 (RGE) is the Integrin-binding motif element. Residues 195–215 (SFFSGHASFSMYTMLYLVLYL) form a helical membrane-spanning segment. The tract at residues 197–200 (FSGH) is phosphatase sequence motif II. His-200 functions as the Proton donors in the catalytic mechanism. The Cytoplasmic segment spans residues 216–226 (QARFTWRGARL). Residues 227–244 (LRPLLQFTLIMMAFYTGL) traverse the membrane as a helical segment. Residues 245-256 (SRVSDHKHHPSD) form a phosphatase sequence motif III region. Residues 245-258 (SRVSDHKHHPSDVL) lie on the Extracellular side of the membrane. His-252 acts as the Nucleophile in catalysis. Residues 259–279 (AGFAQGALVACCIVFFVSDLF) traverse the membrane as a helical segment. The mediates interaction with CTNND1 stretch occupies residues 276 to 311 (SDLFKTKTTLSLPPSAIRKDMLSPVDIDRSNHHNMV). Topologically, residues 280–311 (KTKTTLSLPPSAIRKDMLSPVDIDRSNHHNMV) are cytoplasmic.

The protein belongs to the PA-phosphatase related phosphoesterase family. As to quaternary structure, forms functional homodimers and homooligomers that are not required for substrate recognition and catalytic activity. Can also form heterooligomers with other PLPP2 and PLPP3. Interacts with CTNND1; negatively regulates the PLPP3-mediated stabilization of beta-catenin/CTNNB1. In terms of processing, N-glycosylated. Contains high-mannose oligosaccharides.

The protein resides in the cell membrane. It is found in the basolateral cell membrane. Its subcellular location is the endoplasmic reticulum membrane. It localises to the endoplasmic reticulum-Golgi intermediate compartment membrane. The protein localises to the golgi apparatus membrane. The protein resides in the golgi apparatus. It is found in the trans-Golgi network membrane. Its subcellular location is the membrane raft. The catalysed reaction is a 1,2-diacyl-sn-glycero-3-phosphate + H2O = a 1,2-diacyl-sn-glycerol + phosphate. The enzyme catalyses 1,2-dihexadecanoyl-sn-glycero-3-phosphate + H2O = 1,2-dihexadecanoyl-sn-glycerol + phosphate. It carries out the reaction 1,2-di-(9Z-octadecenoyl)-sn-glycero-3-phosphate + H2O = 1,2-di-(9Z-octadecenoyl)-sn-glycerol + phosphate. It catalyses the reaction a monoacyl-sn-glycero-3-phosphate + H2O = a monoacylglycerol + phosphate. The catalysed reaction is (9Z)-octadecenoyl-sn-glycero-3-phosphate + H2O = (9Z-octadecenoyl)-glycerol + phosphate. The enzyme catalyses sphing-4-enine 1-phosphate + H2O = sphing-4-enine + phosphate. It carries out the reaction an N-acylsphing-4-enine 1-phosphate + H2O = an N-acylsphing-4-enine + phosphate. It catalyses the reaction N-(octanoyl)-sphing-4-enine-1-phosphate + H2O = N-octanoylsphing-4-enine + phosphate. The catalysed reaction is N-(9Z-octadecenoyl)-ethanolamine phosphate + H2O = N-(9Z-octadecenoyl) ethanolamine + phosphate. It functions in the pathway lipid metabolism; phospholipid metabolism. With respect to regulation, magnesium-independent phospholipid phosphatase. Insensitive to N-ethylmaleimide. Inhibited by sphingosine, zinc ions and modestly by propanolol. Its function is as follows. Magnesium-independent phospholipid phosphatase of the plasma membrane that catalyzes the dephosphorylation of a variety of glycerolipid and sphingolipid phosphate esters including phosphatidate/PA, lysophosphatidate/LPA, diacylglycerol pyrophosphate/DGPP, sphingosine 1-phosphate/S1P and ceramide 1-phosphate/C1P. Also acts on N-oleoyl ethanolamine phosphate/N-(9Z-octadecenoyl)-ethanolamine phosphate, a potential physiological compound. Has both an extracellular and an intracellular phosphatase activity, allowing the hydrolysis and the cellular uptake of these bioactive lipid mediators from the milieu, regulating signal transduction in different cellular processes. Through the dephosphorylation of extracellular sphingosine-1-phosphate and the regulation of its extra- and intracellular availability, plays a role in vascular homeostasis, regulating endothelial cell migration, adhesion, survival, proliferation and the production of pro-inflammatory cytokines. By maintaining the appropriate levels of this lipid in the cerebellum, also ensure its proper development and function. Through its intracellular lipid phosphatase activity may act in early compartments of the secretory pathway, regulating the formation of Golgi to endoplasmic reticulum retrograde transport carriers. Functionally, independently of this phosphatase activity may also function in the Wnt signaling pathway and the stabilization of beta-catenin/CTNNB1, thereby regulating cell proliferation, migration and differentiation in angiogenesis or yet in tumor growth. Also plays a role in integrin-mediated cell-cell adhesion in angiogenesis. This Bos taurus (Bovine) protein is Phospholipid phosphatase 3.